The chain runs to 429 residues: Zinc finger protein 275 (429 aa).

The segment at 31 to 95 is disordered; the sequence is VSDPSPNTDP…DGKRGSPQNL (65 aa). Polar residues predominate over residues 34-51; it reads PSPNTDPAKYSESTSATR. Residue Ser76 is modified to Phosphoserine. Positions 79 to 89 are enriched in basic and acidic residues; sequence FRQHGDSDGKR. 2 consecutive C2H2-type zinc fingers follow at residues 101-123 and 129-151; these read FACK…QRVH and WECG…RKSH. Residues 149 to 176 form a disordered region; the sequence is KSHVAAEPQPGPSRALENAAEKREQMER. A compositionally biased stretch (basic and acidic residues) spans 167 to 176; that stretch reads AAEKREQMER. 9 C2H2-type zinc fingers span residues 181–203, 209–231, 237–259, 265–287, 293–315, 321–343, 349–371, 377–399, and 405–427; these read FECE…LRVH, FDCE…QKLH, FACK…QRMH, FDCD…QRIH, YGCP…RRIH, YACG…ARIH, YACG…RRIH, YECD…RRIH, and CECS…QPTH.

The protein belongs to the krueppel C2H2-type zinc-finger protein family.

The protein resides in the nucleus. In terms of biological role, may be involved in transcriptional regulation. This is Zinc finger protein 275 (ZNF275) from Homo sapiens (Human).